The following is a 226-amino-acid chain: Cytidylate kinase (226 aa).

9 to 17 (GPAGAGKST) provides a ligand contact to ATP.

This sequence belongs to the cytidylate kinase family. Type 1 subfamily.

The protein resides in the cytoplasm. The catalysed reaction is CMP + ATP = CDP + ADP. It catalyses the reaction dCMP + ATP = dCDP + ADP. This is Cytidylate kinase from Clostridium tetani (strain Massachusetts / E88).